The primary structure comprises 139 residues: Transcription antitermination protein NusB (139 aa).

Belongs to the NusB family.

In terms of biological role, involved in transcription antitermination. Required for transcription of ribosomal RNA (rRNA) genes. Binds specifically to the boxA antiterminator sequence of the ribosomal RNA (rrn) operons. The chain is Transcription antitermination protein NusB from Idiomarina loihiensis (strain ATCC BAA-735 / DSM 15497 / L2-TR).